Consider the following 427-residue polypeptide: Serine--tRNA ligase (427 aa).

232–234 (TAE) contributes to the L-serine binding site. An ATP-binding site is contributed by 263-265 (RSE). Glutamate 286 lines the L-serine pocket. 350 to 353 (EISS) is an ATP binding site. L-serine is bound at residue serine 385.

Belongs to the class-II aminoacyl-tRNA synthetase family. Type-1 seryl-tRNA synthetase subfamily. Homodimer. The tRNA molecule binds across the dimer.

The protein resides in the cytoplasm. It catalyses the reaction tRNA(Ser) + L-serine + ATP = L-seryl-tRNA(Ser) + AMP + diphosphate + H(+). The catalysed reaction is tRNA(Sec) + L-serine + ATP = L-seryl-tRNA(Sec) + AMP + diphosphate + H(+). It participates in aminoacyl-tRNA biosynthesis; selenocysteinyl-tRNA(Sec) biosynthesis; L-seryl-tRNA(Sec) from L-serine and tRNA(Sec): step 1/1. Its function is as follows. Catalyzes the attachment of serine to tRNA(Ser). Is also able to aminoacylate tRNA(Sec) with serine, to form the misacylated tRNA L-seryl-tRNA(Sec), which will be further converted into selenocysteinyl-tRNA(Sec). This is Serine--tRNA ligase from Lacticaseibacillus casei (strain BL23) (Lactobacillus casei).